A 102-amino-acid chain; its full sequence is Urease subunit beta (102 aa).

This sequence belongs to the urease beta subunit family. In terms of assembly, heterotrimer of UreA (gamma), UreB (beta) and UreC (alpha) subunits. Three heterotrimers associate to form the active enzyme.

It is found in the cytoplasm. It catalyses the reaction urea + 2 H2O + H(+) = hydrogencarbonate + 2 NH4(+). It functions in the pathway nitrogen metabolism; urea degradation; CO(2) and NH(3) from urea (urease route): step 1/1. This Methylibium petroleiphilum (strain ATCC BAA-1232 / LMG 22953 / PM1) protein is Urease subunit beta.